The chain runs to 445 residues: Phosphoglucosamine mutase (445 aa).

Serine 102 (phosphoserine intermediate) is an active-site residue. Residues serine 102, aspartate 241, aspartate 243, and aspartate 245 each coordinate Mg(2+). Position 102 is a phosphoserine (serine 102).

This sequence belongs to the phosphohexose mutase family. Mg(2+) serves as cofactor. Post-translationally, activated by phosphorylation.

It carries out the reaction alpha-D-glucosamine 1-phosphate = D-glucosamine 6-phosphate. Its function is as follows. Catalyzes the conversion of glucosamine-6-phosphate to glucosamine-1-phosphate. The chain is Phosphoglucosamine mutase from Acinetobacter baumannii (strain AB0057).